Reading from the N-terminus, the 262-residue chain is Cerebellar degeneration-related antigen 1 (262 aa).

34 tandem repeats follow at residues 3 to 8, 9 to 14, 15 to 20, 21 to 26, 27 to 32, 33 to 38, 39 to 44, 45 to 50, 51 to 56, 57 to 62, 63 to 68, 69 to 74, 75 to 80, 81 to 86, 87 to 92, 93 to 98, 99 to 104, 105 to 110, 111 to 116, 117 to 122, 123 to 128, 129 to 134, 135 to 140, 141 to 146, 147 to 152, 153 to 158, 159 to 164, 165 to 170, 171 to 176, 177 to 182, 183 to 188, 189 to 194, 195 to 200, and 201 to 206. Positions 3 to 140 are 23 X 6 AA approximate repeats; sequence WLEDVDFLED…EDLEAIGRCG (138 aa). The segment at 141–176 is 6 X 6 AA approximate repeats; sequence FSGRHGFFGRRRFSGRPKLSGRLGLLGRRGFSGRLG. Positions 177 to 206 are 5 X 6 AA approximate repeats; the sequence is GYWKTWIFWKTWIFWKTWIFRKTYIGWKTW.

Brain; predominantly expressed in normal neuroectodermal tissues and in certain malignant tumors.

The sequence is that of Cerebellar degeneration-related antigen 1 (CDR1) from Homo sapiens (Human).